The following is a 568-amino-acid chain: Sulfite reductase [NADPH] hemoprotein beta-component (568 aa).

Cys425, Cys431, Cys470, and Cys474 together coordinate [4Fe-4S] cluster. Cys474 lines the siroheme pocket.

Belongs to the nitrite and sulfite reductase 4Fe-4S domain family. As to quaternary structure, alpha(8)-beta(8). The alpha component is a flavoprotein, the beta component is a hemoprotein. Requires siroheme as cofactor. It depends on [4Fe-4S] cluster as a cofactor.

The catalysed reaction is hydrogen sulfide + 3 NADP(+) + 3 H2O = sulfite + 3 NADPH + 4 H(+). Its pathway is sulfur metabolism; hydrogen sulfide biosynthesis; hydrogen sulfide from sulfite (NADPH route): step 1/1. In terms of biological role, component of the sulfite reductase complex that catalyzes the 6-electron reduction of sulfite to sulfide. This is one of several activities required for the biosynthesis of L-cysteine from sulfate. This Xanthomonas campestris pv. campestris (strain B100) protein is Sulfite reductase [NADPH] hemoprotein beta-component.